Here is a 426-residue protein sequence, read N- to C-terminus: MFSPGTTVEVSSKINNKEVVWVPAVVIKEFKEDDEYKYIVRVYDKSFSCKGNKAARLNKTVDLCSLRPTPPSISVEEYQLKEYVEVFHDGMGWRQGRVMKIQERVMLSQGRVMVSQGRVMGNLSQKCYIVLLEATKKQISFKQSDLRPLQVWEDGVWKMLQTRESSLTQGSGDETSDSVRNANESDPPVTPRPGITTPPLKQIEAETQRKTLPRNQNASVNDSTRENENSEDINRKRKREESLCSDASVEDTTMTLPFEKKLSIWKTLESVETVPQSPHFSPLVETREDCREMSAVGMMLTFPCLLEEVKSLQHDNSISSLISLSNNFCELEKHGFNVKAPQSRISKLLSLRGKQSMKMDELKGAEKVTAEKESIKIENERKILELQRLNEEVDKEIAQSKSCAAKIVQQLEDVELQFQTTASAPW.

Polar residues-rich tracts occupy residues 164 to 184 and 213 to 222; these read ESSL…NANE and PRNQNASVND. The interval 164–248 is disordered; sequence ESSLTQGSGD…REESLCSDAS (85 aa). Residues 223–242 show a composition bias toward basic and acidic residues; it reads STRENENSEDINRKRKREES. In terms of domain architecture, DUF724 spans 256 to 425; it reads LPFEKKLSIW…LQFQTTASAP (170 aa). Positions 370-402 form a coiled coil; the sequence is AEKESIKIENERKILELQRLNEEVDKEIAQSKS.

Expressed in flowers.

It is found in the nucleus. Functionally, may be involved in the polar growth of plant cells via transportation of RNAs. The sequence is that of DUF724 domain-containing protein 9 from Arabidopsis thaliana (Mouse-ear cress).